The following is a 373-amino-acid chain: 3 beta-hydroxysteroid dehydrogenase/Delta 5--&gt;4-isomerase (373 aa).

The active-site Proton acceptor is the tyrosine 155. Residue lysine 159 coordinates NAD(+). The helical transmembrane segment at isoleucine 288–isoleucine 308 threads the bilayer.

It belongs to the 3-beta-HSD family.

The protein localises to the endoplasmic reticulum membrane. The protein resides in the mitochondrion membrane. It catalyses the reaction a 3beta-hydroxy-Delta(5)-steroid + NAD(+) = a 3-oxo-Delta(5)-steroid + NADH + H(+). The enzyme catalyses a 3-oxo-Delta(5)-steroid = a 3-oxo-Delta(4)-steroid. Its pathway is lipid metabolism; steroid biosynthesis. In terms of biological role, 3-beta-HSD is a bifunctional enzyme, that catalyzes the oxidative conversion of Delta(5)-ene-3-beta-hydroxy steroid, and the oxidative conversion of ketosteroids. The 3-beta-HSD enzymatic system plays a crucial role in the biosynthesis of all classes of hormonal steroids. The protein is 3 beta-hydroxysteroid dehydrogenase/Delta 5--&gt;4-isomerase (HSD3B) of Bos taurus (Bovine).